Consider the following 444-residue polypeptide: Probable D-serine dehydratase (444 aa).

N6-(pyridoxal phosphate)lysine is present on Lys-118.

The protein belongs to the serine/threonine dehydratase family. DsdA subfamily. Pyridoxal 5'-phosphate is required as a cofactor.

It carries out the reaction D-serine = pyruvate + NH4(+). This Acinetobacter baumannii (strain AB0057) protein is Probable D-serine dehydratase.